The primary structure comprises 272 residues: Endogenous Bornavirus-like nucleoprotein 2 (272 aa).

The tract at residues 48-70 (MSHLRKDSQPSSPGDDAMDRSGL) is disordered.

In terms of biological role, may act as an RNA-binding protein. The C-terminal region is highly homologous to the bornavirus nucleocapsid N protein that binds viral RNA and oligomerizes. The viral protein also possesses a nuclear import and a nuclear export signal. These 2 signals seem absent in EBLN-2 supporting an unrelated function in Human. The chain is Endogenous Bornavirus-like nucleoprotein 2 (EBLN2) from Homo sapiens (Human).